The following is a 132-amino-acid chain: Small ribosomal subunit protein uS8 (132 aa).

The protein belongs to the universal ribosomal protein uS8 family. As to quaternary structure, part of the 30S ribosomal subunit. Contacts proteins S5 and S12.

Functionally, one of the primary rRNA binding proteins, it binds directly to 16S rRNA central domain where it helps coordinate assembly of the platform of the 30S subunit. This chain is Small ribosomal subunit protein uS8, found in Staphylococcus haemolyticus (strain JCSC1435).